A 248-amino-acid chain; its full sequence is Probable proteasome subunit alpha type-3 (248 aa).

It belongs to the peptidase T1A family. In terms of assembly, the 26S proteasome consists of a 20S proteasome core and two 19S regulatory subunits. The 20S proteasome core is composed of 28 subunits that are arranged in four stacked rings, resulting in a barrel-shaped structure. The two end rings are each formed by seven alpha subunits, and the two central rings are each formed by seven beta subunits. The catalytic chamber with the active sites is on the inside of the barrel.

The protein resides in the cytoplasm. The protein localises to the nucleus. Functionally, the proteasome is a multicatalytic proteinase complex which is characterized by its ability to cleave peptides with Arg, Phe, Tyr, Leu, and Glu adjacent to the leaving group at neutral or slightly basic pH. The proteasome has an ATP-dependent proteolytic activity. This chain is Probable proteasome subunit alpha type-3, found in Schizosaccharomyces pombe (strain 972 / ATCC 24843) (Fission yeast).